The following is a 120-amino-acid chain: Aspartate 1-decarboxylase (120 aa).

Serine 25 acts as the Schiff-base intermediate with substrate; via pyruvic acid in catalysis. Serine 25 is subject to Pyruvic acid (Ser). Threonine 57 is a binding site for substrate. The active-site Proton donor is the tyrosine 58. Residue 73–75 (GAA) participates in substrate binding.

It belongs to the PanD family. In terms of assembly, heterooctamer of four alpha and four beta subunits. Requires pyruvate as cofactor. In terms of processing, is synthesized initially as an inactive proenzyme, which is activated by self-cleavage at a specific serine bond to produce a beta-subunit with a hydroxyl group at its C-terminus and an alpha-subunit with a pyruvoyl group at its N-terminus.

It is found in the cytoplasm. The enzyme catalyses L-aspartate + H(+) = beta-alanine + CO2. Its pathway is cofactor biosynthesis; (R)-pantothenate biosynthesis; beta-alanine from L-aspartate: step 1/1. Its function is as follows. Catalyzes the pyruvoyl-dependent decarboxylation of aspartate to produce beta-alanine. The sequence is that of Aspartate 1-decarboxylase from Ralstonia nicotianae (strain ATCC BAA-1114 / GMI1000) (Ralstonia solanacearum).